The sequence spans 305 residues: Ribonuclease BN (305 aa).

Residues His64, His66, Asp68, His69, His141, Asp212, and His270 each contribute to the Zn(2+) site. Asp68 serves as the catalytic Proton acceptor.

This sequence belongs to the RNase Z family. RNase BN subfamily. As to quaternary structure, homodimer. It depends on Zn(2+) as a cofactor.

Its function is as follows. Zinc phosphodiesterase, which has both exoribonuclease and endoribonuclease activities. The sequence is that of Ribonuclease BN from Enterobacter sp. (strain 638).